A 117-amino-acid polypeptide reads, in one-letter code: ATP-dependent Clp protease adapter protein ClpS 1 (117 aa).

Belongs to the ClpS family. Binds to the N-terminal domain of the chaperone ClpA.

Functionally, involved in the modulation of the specificity of the ClpAP-mediated ATP-dependent protein degradation. The polypeptide is ATP-dependent Clp protease adapter protein ClpS 1 (Agrobacterium fabrum (strain C58 / ATCC 33970) (Agrobacterium tumefaciens (strain C58))).